The chain runs to 193 residues: uncharacterized protein (193 aa).

The next 4 membrane-spanning stretches (helical) occupy residues 40-56, 63-79, 86-110, and 117-138; these read LYIA…LKLI, AAGL…SSLC, CSGY…IVSC, and FIFP…FQIY. Residues 158-193 form a disordered region; the sequence is TTTKLSRSSSAPDLSCPSLSTQPTSPNQSLSAYKKY.

This sequence belongs to the chlamydial CPn_0442/CT_006/TC_0274 family.

It is found in the cell membrane. This is an uncharacterized protein from Chlamydia muridarum (strain MoPn / Nigg).